We begin with the raw amino-acid sequence, 225 residues long: Cytochrome c oxidase subunit 2 (225 aa).

Over 1 to 25 (MSTWMMFMFQESNSLYADNLVSFHN) the chain is Mitochondrial intermembrane. A helical transmembrane segment spans residues 26-47 (MVMIIVIMISTLTVYIIFDLFL). Over 48–62 (NKFSNLYLLKNHNIE) the chain is Mitochondrial matrix. The chain crosses the membrane as a helical span at residues 63–82 (IIWMIVPIVILLIICFPSLK). Over 83 to 225 (ILYLIDEIVN…YFMNWIYKMN (143 aa)) the chain is Mitochondrial intermembrane. Positions 159, 194, 196, 198, 202, and 205 each coordinate Cu cation. A Mg(2+)-binding site is contributed by E196.

This sequence belongs to the cytochrome c oxidase subunit 2 family. In terms of assembly, component of the cytochrome c oxidase (complex IV, CIV), a multisubunit enzyme composed of a catalytic core of 3 subunits and several supernumerary subunits. The complex exists as a monomer or a dimer and forms supercomplexes (SCs) in the inner mitochondrial membrane with ubiquinol-cytochrome c oxidoreductase (cytochrome b-c1 complex, complex III, CIII). It depends on Cu cation as a cofactor.

It localises to the mitochondrion inner membrane. The catalysed reaction is 4 Fe(II)-[cytochrome c] + O2 + 8 H(+)(in) = 4 Fe(III)-[cytochrome c] + 2 H2O + 4 H(+)(out). Component of the cytochrome c oxidase, the last enzyme in the mitochondrial electron transport chain which drives oxidative phosphorylation. The respiratory chain contains 3 multisubunit complexes succinate dehydrogenase (complex II, CII), ubiquinol-cytochrome c oxidoreductase (cytochrome b-c1 complex, complex III, CIII) and cytochrome c oxidase (complex IV, CIV), that cooperate to transfer electrons derived from NADH and succinate to molecular oxygen, creating an electrochemical gradient over the inner membrane that drives transmembrane transport and the ATP synthase. Cytochrome c oxidase is the component of the respiratory chain that catalyzes the reduction of oxygen to water. Electrons originating from reduced cytochrome c in the intermembrane space (IMS) are transferred via the dinuclear copper A center (CU(A)) of subunit 2 and heme A of subunit 1 to the active site in subunit 1, a binuclear center (BNC) formed by heme A3 and copper B (CU(B)). The BNC reduces molecular oxygen to 2 water molecules using 4 electrons from cytochrome c in the IMS and 4 protons from the mitochondrial matrix. This is Cytochrome c oxidase subunit 2 (COII) from Apis florea (Dwarf honeybee).